The primary structure comprises 727 residues: Glucans biosynthesis glucosyltransferase H (727 aa).

The disordered stretch occupies residues 18–41; sequence SAMPNERPGAMEPQKLSKMPEGFP. 7 helical membrane-spanning segments follow: residues 58–78, 97–117, 278–298, 408–428, 460–480, 496–516, and 572–592; these read FLVVGGALLLSLFAIYEMGAV, VNFCWIALAFCSGIAGFLILL, LQQFAARIYGPVIGTGLGWWV, IMAYLSSPFWLMLILTGLMLA, LFYITMGVLFGPKVFGVLLLL, IFSVIFEVILSALIAPIMMFI, and LLAWMSPALIGLWIAVPISAW.

The protein belongs to the glycosyltransferase 2 family. OpgH subfamily.

Its subcellular location is the cell inner membrane. The protein operates within glycan metabolism; osmoregulated periplasmic glucan (OPG) biosynthesis. Functionally, involved in the biosynthesis of osmoregulated periplasmic glucans (OPGs). The sequence is that of Glucans biosynthesis glucosyltransferase H from Shewanella baltica (strain OS155 / ATCC BAA-1091).